A 289-amino-acid polypeptide reads, in one-letter code: Glucose and ribitol dehydrogenase homolog 2 (289 aa).

Residues 1-32 (MASGFPPQKQETQPGIQHVMEPTPEFSSSNYK) form a disordered region. 43–67 (LVTGGDSGIGKAVCHCYALEGASVA) contacts NAD(+). Ser-180 contacts substrate. Tyr-193 functions as the Proton acceptor in the catalytic mechanism.

Belongs to the short-chain dehydrogenases/reductases (SDR) family.

Functionally, may act as a short alcohol-polyol-sugar dehydrogenase possibly related to carbohydrate metabolism and the acquisition of desiccation tolerance. May also be involved in signal transduction. The polypeptide is Glucose and ribitol dehydrogenase homolog 2 (Arabidopsis thaliana (Mouse-ear cress)).